The following is a 153-amino-acid chain: Large ribosomal subunit protein bL9 (153 aa).

This sequence belongs to the bacterial ribosomal protein bL9 family.

Binds to the 23S rRNA. In Gloeobacter violaceus (strain ATCC 29082 / PCC 7421), this protein is Large ribosomal subunit protein bL9.